The following is a 211-amino-acid chain: ATP phosphoribosyltransferase (211 aa).

The protein belongs to the ATP phosphoribosyltransferase family. Short subfamily. In terms of assembly, heteromultimer composed of HisG and HisZ subunits.

It localises to the cytoplasm. It catalyses the reaction 1-(5-phospho-beta-D-ribosyl)-ATP + diphosphate = 5-phospho-alpha-D-ribose 1-diphosphate + ATP. Its pathway is amino-acid biosynthesis; L-histidine biosynthesis; L-histidine from 5-phospho-alpha-D-ribose 1-diphosphate: step 1/9. Catalyzes the condensation of ATP and 5-phosphoribose 1-diphosphate to form N'-(5'-phosphoribosyl)-ATP (PR-ATP). Has a crucial role in the pathway because the rate of histidine biosynthesis seems to be controlled primarily by regulation of HisG enzymatic activity. This chain is ATP phosphoribosyltransferase, found in Pseudomonas paraeruginosa (strain DSM 24068 / PA7) (Pseudomonas aeruginosa (strain PA7)).